A 105-amino-acid polypeptide reads, in one-letter code: uncharacterized protein (105 aa).

The protein belongs to the EspC family.

May be involved in assembly of the ESX-1 / type VII specialized secretion system (T7SS), which exports several proteins including EsxA and EsxB. Involved in DNA conjugation, in at least recipient strain. This is an uncharacterized protein from Mycolicibacterium smegmatis (strain MKD8) (Mycobacterium smegmatis).